The sequence spans 70 residues: Small ribosomal subunit protein bS21 (70 aa).

Positions 48-61 are enriched in basic residues; sequence KLAAAVKRQSKRLR. Residues 48 to 70 are disordered; that stretch reads KLAAAVKRQSKRLRSQQLPPKMY.

It belongs to the bacterial ribosomal protein bS21 family.

The polypeptide is Small ribosomal subunit protein bS21 (Thiobacillus denitrificans (strain ATCC 25259 / T1)).